The sequence spans 196 residues: uncharacterized protein (196 aa).

This is an uncharacterized protein from Acanthamoeba polyphaga mimivirus (APMV).